The primary structure comprises 379 residues: Arginine biosynthesis bifunctional protein ArgJ (379 aa).

Substrate-binding residues include Thr-140, Lys-160, Thr-171, Glu-249, Asn-374, and Thr-379. The active-site Nucleophile is the Thr-171.

The protein belongs to the ArgJ family. In terms of assembly, heterotetramer of two alpha and two beta chains.

It is found in the cytoplasm. The catalysed reaction is N(2)-acetyl-L-ornithine + L-glutamate = N-acetyl-L-glutamate + L-ornithine. The enzyme catalyses L-glutamate + acetyl-CoA = N-acetyl-L-glutamate + CoA + H(+). The protein operates within amino-acid biosynthesis; L-arginine biosynthesis; L-ornithine and N-acetyl-L-glutamate from L-glutamate and N(2)-acetyl-L-ornithine (cyclic): step 1/1. It participates in amino-acid biosynthesis; L-arginine biosynthesis; N(2)-acetyl-L-ornithine from L-glutamate: step 1/4. Its function is as follows. Catalyzes two activities which are involved in the cyclic version of arginine biosynthesis: the synthesis of N-acetylglutamate from glutamate and acetyl-CoA as the acetyl donor, and of ornithine by transacetylation between N(2)-acetylornithine and glutamate. The chain is Arginine biosynthesis bifunctional protein ArgJ from Archaeoglobus fulgidus (strain ATCC 49558 / DSM 4304 / JCM 9628 / NBRC 100126 / VC-16).